The chain runs to 423 residues: MAQFIDRRLNGKNKSAVNRQRFLKRHKEQIKESVADAVNRRSITNTETGEDVSIPHKDINEPIFHQGKGGVRERVHPGNDQFITGDKIERPKGGGQGSGSGEGNASPDGEGQDEFVFQISKDEYLDILFEDLELPNLEKNQIAKITEWKTHRAGFQTAGIPSNISVIRSLQQSLARRTAMTAGKKRLLKELEDELTRIKNIEPAQQLEENRLKKEIEELRKKIENVPFIDTFDLRFKNYEKRPVPSSQAVMFCLMDVSGSMDQATKDIAKRFYVLLYLFLTRTYENVDVVFIRHHTQAKEVDEHEFFYSQETGGTIVSSALKLMDEIVKERYPVGQWNIYAAQASDGDNWADDSPRCRDLLVNKLLPNCQYYSYIEITRRSHQTLWHEYEKLTDEFPNFAMKNIRSVEDIFPVFRELFQKETA.

The tract at residues 69-112 (GGVRERVHPGNDQFITGDKIERPKGGGQGSGSGEGNASPDGEGQ) is disordered. The segment covering 93–102 (GGGQGSGSGE) has biased composition (gly residues).

This sequence belongs to the UPF0229 family.

This chain is UPF0229 protein VP0986, found in Vibrio parahaemolyticus serotype O3:K6 (strain RIMD 2210633).